The sequence spans 214 residues: Riboflavin kinase (214 aa).

The tract at residues 1–26 (MRPDGPRDPVAGPDSGPEPPYPVRLS) is disordered. Mg(2+) contacts are provided by threonine 44 and asparagine 46. Glutamate 116 functions as the Nucleophile in the catalytic mechanism.

This sequence belongs to the flavokinase family. It depends on Zn(2+) as a cofactor. Mg(2+) serves as cofactor.

The enzyme catalyses riboflavin + ATP = FMN + ADP + H(+). It functions in the pathway cofactor biosynthesis; FMN biosynthesis; FMN from riboflavin (ATP route): step 1/1. Catalyzes the phosphorylation of riboflavin (vitamin B2) to form flavin mononucleotide (FMN) coenzyme. This chain is Riboflavin kinase (fmn1), found in Aspergillus fumigatus (strain ATCC MYA-4609 / CBS 101355 / FGSC A1100 / Af293) (Neosartorya fumigata).